A 303-amino-acid chain; its full sequence is Imidazoleglycerol-phosphate dehydratase (303 aa).

The protein belongs to the imidazoleglycerol-phosphate dehydratase family.

The protein resides in the cytoplasm. It catalyses the reaction D-erythro-1-(imidazol-4-yl)glycerol 3-phosphate = 3-(imidazol-4-yl)-2-oxopropyl phosphate + H2O. It functions in the pathway amino-acid biosynthesis; L-histidine biosynthesis; L-histidine from 5-phospho-alpha-D-ribose 1-diphosphate: step 6/9. This is Imidazoleglycerol-phosphate dehydratase from Neisseria gonorrhoeae (strain ATCC 700825 / FA 1090).